The primary structure comprises 518 residues: Probable lysine--tRNA ligase, cytoplasmic (518 aa).

It belongs to the class-II aminoacyl-tRNA synthetase family. Homodimer.

It localises to the cytoplasm. The catalysed reaction is tRNA(Lys) + L-lysine + ATP = L-lysyl-tRNA(Lys) + AMP + diphosphate. This is Probable lysine--tRNA ligase, cytoplasmic from Enterocytozoon bieneusi (strain H348) (Microsporidian parasite).